The following is a 363-amino-acid chain: Pyrimidine monooxygenase RutA (363 aa).

FMN-binding positions include 49-50 (IK), Asn115, Glu124, 140-141 (RY), and Ser190.

It belongs to the NtaA/SnaA/DszA monooxygenase family. RutA subfamily.

It catalyses the reaction uracil + FMNH2 + NADH + O2 = (Z)-3-ureidoacrylate + FMN + NAD(+) + H2O + H(+). The catalysed reaction is thymine + FMNH2 + NADH + O2 = (Z)-2-methylureidoacrylate + FMN + NAD(+) + H2O + H(+). In terms of biological role, catalyzes the pyrimidine ring opening between N-3 and C-4 by an unusual flavin hydroperoxide-catalyzed mechanism, adding oxygen atoms in the process to yield ureidoacrylate peracid, that immediately reacts with FMN forming ureidoacrylate and FMN-N(5)-oxide. The FMN-N(5)-oxide reacts spontaneously with NADH to produce FMN. Requires the flavin reductase RutF to regenerate FMN in vivo. This chain is Pyrimidine monooxygenase RutA, found in Rhizobium rhizogenes (strain K84 / ATCC BAA-868) (Agrobacterium radiobacter).